Reading from the N-terminus, the 459-residue chain is Peptidyl-prolyl cis-trans isomerase FKBP4 (459 aa).

M1 carries the N-acetylmethionine; in peptidyl-prolyl cis-trans isomerase FKBP4; alternate modification. The tract at residues M1 to D24 is disordered. Residue T2 is modified to N-acetylthreonine; in peptidyl-prolyl cis-trans isomerase FKBP4, N-terminally processed; partial. Residues G50–K138 form the PPIase FKBP-type 1 domain. The residue at position 143 (T143) is a Phosphothreonine; by CK2. The PPIase FKBP-type 2 domain occupies G167–E253. Position 220 is a phosphotyrosine (Y220). Positions L267–I400 are interaction with tubulin. TPR repeat units follow at residues S270–E303, L319–N352, and E353–N386. K282 is modified (N6-acetyllysine). R373 carries the omega-N-methylarginine modification. The disordered stretch occupies residues E421–A459. Over residues H434–K445 the composition is skewed to basic and acidic residues. T436 is modified (phosphothreonine). K441 is covalently cross-linked (Glycyl lysine isopeptide (Lys-Gly) (interchain with G-Cter in SUMO1)). Residues S446–A459 show a composition bias toward polar residues. 2 positions are modified to phosphoserine: S451 and S453.

As to quaternary structure, homodimer. Interacts with GLMN. Associates with HSP90AA1 and HSP70 in steroid hormone receptor complexes. Also interacts with peroxisomal phytanoyl-CoA alpha-hydroxylase (PHYH). Interacts with NR3C1 and dynein. Interacts with HSF1 in the HSP90 complex. Associates with tubulin. Interacts with MAPT/TAU. Interacts (via TPR domain) with S100A1, S100A2 and S100A6; the interaction is Ca(2+) dependent. Interaction with S100A1 and S100A2 (but not with S100A6) leads to inhibition of FKBP4-HSP90 interaction. Interacts with dynein; causes partially NR3C1 transport to the nucleus. Phosphorylation by CK2 results in loss of HSP90 binding activity. Widely expressed.

Its subcellular location is the cytoplasm. The protein resides in the cytosol. It localises to the mitochondrion. The protein localises to the nucleus. It is found in the cytoskeleton. Its subcellular location is the cell projection. The protein resides in the axon. The catalysed reaction is [protein]-peptidylproline (omega=180) = [protein]-peptidylproline (omega=0). Its activity is regulated as follows. Inhibited by FK506. Immunophilin protein with PPIase and co-chaperone activities. Component of steroid receptors heterocomplexes through interaction with heat-shock protein 90 (HSP90). May play a role in the intracellular trafficking of heterooligomeric forms of steroid hormone receptors between cytoplasm and nuclear compartments. The isomerase activity controls neuronal growth cones via regulation of TRPC1 channel opening. Also acts as a regulator of microtubule dynamics by inhibiting MAPT/TAU ability to promote microtubule assembly. May have a protective role against oxidative stress in mitochondria. This Homo sapiens (Human) protein is Peptidyl-prolyl cis-trans isomerase FKBP4 (FKBP4).